The chain runs to 312 residues: tRNA uridine(34) hydroxylase (312 aa).

Residues 130–225 enclose the Rhodanese domain; that stretch reads RGDEVVFFDG…YGEKFGNQGL (96 aa). Cys185 acts as the Cysteine persulfide intermediate in catalysis.

Belongs to the TrhO family.

It catalyses the reaction uridine(34) in tRNA + AH2 + O2 = 5-hydroxyuridine(34) in tRNA + A + H2O. Its function is as follows. Catalyzes oxygen-dependent 5-hydroxyuridine (ho5U) modification at position 34 in tRNAs. The polypeptide is tRNA uridine(34) hydroxylase (Corynebacterium efficiens (strain DSM 44549 / YS-314 / AJ 12310 / JCM 11189 / NBRC 100395)).